The chain runs to 129 residues: UPF0102 protein Cpar_0015 (129 aa).

The protein belongs to the UPF0102 family.

The protein is UPF0102 protein Cpar_0015 of Chlorobaculum parvum (strain DSM 263 / NCIMB 8327) (Chlorobium vibrioforme subsp. thiosulfatophilum).